The following is a 3174-amino-acid chain: Probable polyketide synthase 15 (3174 aa).

A Ketosynthase family 3 (KS3) domain is found at 23-474; sequence NDEIAIVGIG…GSNCCLILSQ (452 aa). Residues cysteine 194, histidine 342, and histidine 397 each act as for beta-ketoacyl synthase activity in the active site. 2 coiled-coil regions span residues 472–509 and 574–604; these read LSQFKNNENQQQQQQQQQQQQQQQQQQQQQRGQQQYDN and EFNKQKQSQKEKEKEKEREGEEKEQLNRVQT. Over residues 578-599 the composition is skewed to basic and acidic residues; the sequence is QKQSQKEKEKEKEREGEEKEQL. Residues 578–601 form a disordered region; sequence QKQSQKEKEKEKEREGEEKEQLNR. The tract at residues 707–740 is acyl/malonyl transferase; the sequence is GIEASFIVGHSLGEIPAAYCSGMITLDTLCYLIY. Serine 717 functions as the For acyl/malonyl transferase activity in the catalytic mechanism. Positions 1034 to 1156 are N-terminal hotdog fold; that stretch reads IDILGLSNYD…ANFQLLNNNN (123 aa). One can recognise a PKS/mFAS DH domain in the interval 1034-1332; it reads IDILGLSNYD…CKSLKIVKNP (299 aa). Histidine 1068 serves as the catalytic Proton acceptor; for dehydratase activity. Positions 1182–1332 are C-terminal hotdog fold; the sequence is NKTKISRIDL…CKSLKIVKNP (151 aa). The active-site Proton donor; for dehydratase activity is aspartate 1241. The stretch at 1758–1793 forms a coiled coil; that stretch reads LEININNNNNNNNNNNNNNNNNNNNNNNNNNYEDNV. One can recognise a Carrier domain in the interval 2653–2730; it reads VDSLNIKDIF…LVIKIIITAI (78 aa). Serine 2690 bears the O-(pantetheine 4'-phosphoryl)serine mark.

The cofactor is pantetheine 4'-phosphate.

Functionally, probable polyketide synthase. The protein is Probable polyketide synthase 15 (pks15) of Dictyostelium discoideum (Social amoeba).